The primary structure comprises 61 residues: Small ribosomal subunit protein uS14 (61 aa).

The Zn(2+) site is built by C24, C27, C40, and C43.

Belongs to the universal ribosomal protein uS14 family. Zinc-binding uS14 subfamily. Part of the 30S ribosomal subunit. Contacts proteins S3 and S10. The cofactor is Zn(2+).

Functionally, binds 16S rRNA, required for the assembly of 30S particles and may also be responsible for determining the conformation of the 16S rRNA at the A site. The protein is Small ribosomal subunit protein uS14 of Thermus aquaticus.